The chain runs to 217 residues: GTP cyclohydrolase 1 (217 aa).

C109, H112, and C180 together coordinate Zn(2+).

This sequence belongs to the GTP cyclohydrolase I family. Toroid-shaped homodecamer, composed of two pentamers of five dimers.

It catalyses the reaction GTP + H2O = 7,8-dihydroneopterin 3'-triphosphate + formate + H(+). Its pathway is cofactor biosynthesis; 7,8-dihydroneopterin triphosphate biosynthesis; 7,8-dihydroneopterin triphosphate from GTP: step 1/1. The sequence is that of GTP cyclohydrolase 1 from Vibrio campbellii (strain ATCC BAA-1116).